Reading from the N-terminus, the 299-residue chain is Ribosomal protein L11 methyltransferase (299 aa).

Residues Thr152, Gly172, Asp194, and Asn234 each coordinate S-adenosyl-L-methionine.

Belongs to the methyltransferase superfamily. PrmA family.

Its subcellular location is the cytoplasm. The enzyme catalyses L-lysyl-[protein] + 3 S-adenosyl-L-methionine = N(6),N(6),N(6)-trimethyl-L-lysyl-[protein] + 3 S-adenosyl-L-homocysteine + 3 H(+). Functionally, methylates ribosomal protein L11. The chain is Ribosomal protein L11 methyltransferase from Geobacter sulfurreducens (strain ATCC 51573 / DSM 12127 / PCA).